A 230-amino-acid polypeptide reads, in one-letter code: ATP synthase subunit a 1 (230 aa).

A run of 5 helical transmembrane segments spans residues 20 to 40, 78 to 98, 112 to 132, 174 to 194, and 195 to 215; these read ATIV…WLIT, FLPF…LTIF, AALA…NVGI, LLVA…MTLF, and GLLV…VYIA.

It belongs to the ATPase A chain family. In terms of assembly, F-type ATPases have 2 components, CF(1) - the catalytic core - and CF(0) - the membrane proton channel. CF(1) has five subunits: alpha(3), beta(3), gamma(1), delta(1), epsilon(1). CF(0) has four main subunits: a, b, b' and c.

It is found in the cellular thylakoid membrane. In terms of biological role, key component of the proton channel; it plays a direct role in the translocation of protons across the membrane. The sequence is that of ATP synthase subunit a 1 from Crocosphaera subtropica (strain ATCC 51142 / BH68) (Cyanothece sp. (strain ATCC 51142)).